The primary structure comprises 261 residues: Pantothenate synthetase (261 aa).

Position 29–36 (29–36 (MGALHNGH)) interacts with ATP. Histidine 36 (proton donor) is an active-site residue. Glutamine 60 serves as a coordination point for (R)-pantoate. Beta-alanine is bound at residue glutamine 60. An ATP-binding site is contributed by 147 to 150 (GEKD). Glutamine 153 contacts (R)-pantoate. 184 to 187 (LSSR) is a binding site for ATP.

Belongs to the pantothenate synthetase family. Homodimer.

It is found in the cytoplasm. It carries out the reaction (R)-pantoate + beta-alanine + ATP = (R)-pantothenate + AMP + diphosphate + H(+). It functions in the pathway cofactor biosynthesis; (R)-pantothenate biosynthesis; (R)-pantothenate from (R)-pantoate and beta-alanine: step 1/1. Functionally, catalyzes the condensation of pantoate with beta-alanine in an ATP-dependent reaction via a pantoyl-adenylate intermediate. The sequence is that of Pantothenate synthetase from Francisella tularensis subsp. mediasiatica (strain FSC147).